The following is a 504-amino-acid chain: Maturase K (504 aa).

This sequence belongs to the intron maturase 2 family. MatK subfamily.

The protein resides in the plastid. It is found in the chloroplast. In terms of biological role, usually encoded in the trnK tRNA gene intron. Probably assists in splicing its own and other chloroplast group II introns. The polypeptide is Maturase K (Quercus cerris (Turkey oak)).